The following is a 485-amino-acid chain: Probable glycine dehydrogenase (decarboxylating) subunit 2 (485 aa).

Position 273 is an N6-(pyridoxal phosphate)lysine (Lys273).

It belongs to the GcvP family. C-terminal subunit subfamily. The glycine cleavage system is composed of four proteins: P, T, L and H. In this organism, the P 'protein' is a heterodimer of two subunits. It depends on pyridoxal 5'-phosphate as a cofactor.

It catalyses the reaction N(6)-[(R)-lipoyl]-L-lysyl-[glycine-cleavage complex H protein] + glycine + H(+) = N(6)-[(R)-S(8)-aminomethyldihydrolipoyl]-L-lysyl-[glycine-cleavage complex H protein] + CO2. In terms of biological role, the glycine cleavage system catalyzes the degradation of glycine. The P protein binds the alpha-amino group of glycine through its pyridoxal phosphate cofactor; CO(2) is released and the remaining methylamine moiety is then transferred to the lipoamide cofactor of the H protein. The polypeptide is Probable glycine dehydrogenase (decarboxylating) subunit 2 (Oceanobacillus iheyensis (strain DSM 14371 / CIP 107618 / JCM 11309 / KCTC 3954 / HTE831)).